Consider the following 170-residue polypeptide: Brassinosteroid-responsive RING protein 1 (170 aa).

Residues 15–37 form a helical membrane-spanning segment; it reads LFVQTLSILGFIRTIVFSIFRFL. The RING-type; atypical zinc-finger motif lies at 94 to 137; sequence CAVCLYEFEGEQEIRWLRNCRHIFHRSCLDRWMDHDQKTCPLCR.

This sequence belongs to the RING-type zinc finger family. In terms of tissue distribution, highly expressed in stems, rosette leaves and siliques, and moderately expressed in roots, cauline leaves and flower. Detected at low levels in seeds.

The protein resides in the membrane. Its function is as follows. May be involved in the brassinosteroids (BRs) signaling pathway and regulate the growth and development of rosette leaves. Seems to prevent over development of leaves and inflorescence stems. In Arabidopsis thaliana (Mouse-ear cress), this protein is Brassinosteroid-responsive RING protein 1.